We begin with the raw amino-acid sequence, 907 residues long: Phototropin-2 (907 aa).

The disordered stretch occupies residues 28–84 (ATAGLEIVAEDAPSGSSGAHQQQAWRPVAPATAGRDSGGTGSGKSSVDGGVGRASHD). The span at 41 to 51 (SGSSGAHQQQA) shows a compositional bias: polar residues. One can recognise a PAS 1 domain in the interval 89–162 (VSQELKDALS…AKIRDAVKHG (74 aa)). Residues 138–143 (NCRFLQ), Arg-156, Asn-171, Asn-181, and Gln-202 contribute to the FMN site. Cys-139 carries the post-translational modification S-4a-FMN cysteine. The PAC 1 domain maps to 163–217 (RSFCGRLLNYRKDGAPFWNLLTVTPIRDDNGKVIKFIGMQVEVSKYTEGLSDKRM). Residues 332-363 (RSSVGSREAPAVVEEPAPAPPPAPEVVERTDS) form a disordered region. Residues 375–448 (QGIDLATTLE…DKIREAIREQ (74 aa)) form the PAS 2 domain. FMN contacts are provided by residues 424–429 (NCRFLQ), Arg-442, Asn-457, Asn-467, and Gln-488. At Cys-425 the chain carries S-4a-FMN cysteine. The 55-residue stretch at 449–503 (KEITVQLINYTKSGKKFWNLFHLQPMRDQKGELQYFIGVQLDGSDHVEPLRNRLS) folds into the PAC 2 domain. The 288-residue stretch at 576 to 863 (FKPVKPLGCG…ANDIKQHSFF (288 aa)) folds into the Protein kinase domain. Residues 582 to 590 (LGCGDTGSV) and Lys-605 contribute to the ATP site. Catalysis depends on Asp-701, which acts as the Proton acceptor.

It belongs to the protein kinase superfamily. Ser/Thr protein kinase family. In terms of assembly, homodimer. It depends on FMN as a cofactor. Autophosphorylated in response to blue light irradiation. In terms of processing, 2 molecules of FMN bind covalently to cysteines after exposure to blue light and are reversed in the dark. In terms of tissue distribution, expressed at low levels in leaves of dark-grown seedlings.

It carries out the reaction L-seryl-[protein] + ATP = O-phospho-L-seryl-[protein] + ADP + H(+). It catalyses the reaction L-threonyl-[protein] + ATP = O-phospho-L-threonyl-[protein] + ADP + H(+). Functionally, protein kinase that acts as a blue light photoreceptor in a signal-transduction pathway for phototropic responses. Regulates a wide range of physiological activities in plants that maximize the efficiency of photosynthesis, such as chloroplast relocations, stomata opening, and leaf expansion. The protein is Phototropin-2 (PHOT2) of Oryza sativa subsp. japonica (Rice).